The following is a 439-amino-acid chain: Omega-aminotransferase (439 aa).

112–113 (GS) lines the pyridoxal 5'-phosphate pocket. Position 281 is an N6-(pyridoxal phosphate)lysine (K281). T318 contacts pyridoxal 5'-phosphate.

Belongs to the class-III pyridoxal-phosphate-dependent aminotransferase family. As to quaternary structure, homotetramer. Pyridoxal 5'-phosphate is required as a cofactor.

It catalyses the reaction 3-oxopropanoate + L-alanine = beta-alanine + pyruvate. It carries out the reaction 3-aminobutanoate + pyruvate = acetoacetate + L-alanine. The catalysed reaction is benzylamine + pyruvate = benzaldehyde + L-alanine. The enzyme catalyses (S)-1-phenylethylamine + pyruvate = acetophenone + L-alanine. It catalyses the reaction 2-phenylethylamine + pyruvate = 2-phenylacetaldehyde + L-alanine. It carries out the reaction 1-phenylpropylamine + pyruvate = 1-phenylpropan-1-one + L-alanine. The catalysed reaction is 3-phenylpropylamine + pyruvate = 3-phenylpropanal + L-alanine. In terms of biological role, aminotransferase that can use beta-amino acids, aliphatic amines, or aromatic amines as amino donors, and pyruvate as amino acceptor. Shows high activity for short-chain beta-amino acids, with the highest activity for 3-aminobutanoate and beta-alanine in vitro. Displays higher activity toward aromatic amines than aliphatic amines. May be involved in beta-alanine biosynthesis and/or degradation. This chain is Omega-aminotransferase, found in Caulobacter vibrioides (strain ATCC 19089 / CIP 103742 / CB 15) (Caulobacter crescentus).